The following is a 216-amino-acid chain: Cell division protein SepF (216 aa).

Positions 22 to 126 are disordered; it reads EYVEEPDQAR…PVVDDGGPLA (105 aa). 3 stretches are compositionally biased toward basic and acidic residues: residues 28 to 50, 62 to 80, and 106 to 118; these read DQAR…REFV, SRRD…RPRV, and ARAE…RAPV.

It belongs to the SepF family. In terms of assembly, homodimer. Interacts with FtsZ.

Its subcellular location is the cytoplasm. Functionally, cell division protein that is part of the divisome complex and is recruited early to the Z-ring. Probably stimulates Z-ring formation, perhaps through the cross-linking of FtsZ protofilaments. Its function overlaps with FtsA. This chain is Cell division protein SepF, found in Rhodococcus erythropolis (strain PR4 / NBRC 100887).